The following is a 441-amino-acid chain: Glutamate-1-semialdehyde 2,1-aminomutase (441 aa).

Residue K279 is modified to N6-(pyridoxal phosphate)lysine.

The protein belongs to the class-III pyridoxal-phosphate-dependent aminotransferase family. HemL subfamily. Homodimer. Pyridoxal 5'-phosphate serves as cofactor.

It is found in the cytoplasm. It carries out the reaction (S)-4-amino-5-oxopentanoate = 5-aminolevulinate. It functions in the pathway porphyrin-containing compound metabolism; protoporphyrin-IX biosynthesis; 5-aminolevulinate from L-glutamyl-tRNA(Glu): step 2/2. In Leptospira borgpetersenii serovar Hardjo-bovis (strain JB197), this protein is Glutamate-1-semialdehyde 2,1-aminomutase.